Here is a 250-residue protein sequence, read N- to C-terminus: NAD(P)H-quinone oxidoreductase subunit S, chloroplastic (250 aa).

The transit peptide at 1 to 48 (MATSSITIPTIRTPIHRSKFLGQTHQFSTVNRSVFPPPKQQSKLYQVK) directs the protein to the chloroplast. A Glycyl lysine isopeptide (Lys-Gly) (interchain with G-Cter in ubiquitin) cross-link involves residue K52. Basic and acidic residues-rich tracts occupy residues 76–94 (QRNI…NETE) and 106–115 (VPEDGFEKEM). Disordered stretches follow at residues 76–163 (QRNI…KPKA) and 222–250 (REKG…EAAP). Pro residues predominate over residues 136–146 (NPPPPPPPPPA).

In terms of assembly, part of the chloroplast NDH complex, composed of a mixture of chloroplast and nucleus encoded subunits. Component of the electron donor-binding subcomplex, at least composed of NDHS, NDHT and NDHU. Interacts with the NDH subcomplex A via the protein NDHT and NDHU. Post-translationally, arg-193 is the critical site for the high affinity binding of NDH to ferredoxin.

Its subcellular location is the plastid. The protein localises to the chloroplast thylakoid membrane. It catalyses the reaction a plastoquinone + NADH + (n+1) H(+)(in) = a plastoquinol + NAD(+) + n H(+)(out). The enzyme catalyses a plastoquinone + NADPH + (n+1) H(+)(in) = a plastoquinol + NADP(+) + n H(+)(out). In terms of biological role, NDH shuttles electrons from NAD(P)H:plastoquinone, via FMN and iron-sulfur (Fe-S) centers, to quinones in the photosynthetic chain and possibly in a chloroplast respiratory chain. The immediate electron acceptor for the enzyme in this species is believed to be plastoquinone. Couples the redox reaction to proton translocation, and thus conserves the redox energy in a proton gradient. Required for the efficient operation of ferredoxin-dependent plastoquinone reduction. Forms the electron donor-binding subcomplex in association with the NDHT and NDHU subunits. The protein is NAD(P)H-quinone oxidoreductase subunit S, chloroplastic of Arabidopsis thaliana (Mouse-ear cress).